Consider the following 358-residue polypeptide: Peptide chain release factor 1 (358 aa).

An N5-methylglutamine modification is found at Gln-232.

It belongs to the prokaryotic/mitochondrial release factor family. In terms of processing, methylated by PrmC. Methylation increases the termination efficiency of RF1.

The protein localises to the cytoplasm. Functionally, peptide chain release factor 1 directs the termination of translation in response to the peptide chain termination codons UAG and UAA. The sequence is that of Peptide chain release factor 1 from Acidobacterium capsulatum (strain ATCC 51196 / DSM 11244 / BCRC 80197 / JCM 7670 / NBRC 15755 / NCIMB 13165 / 161).